Reading from the N-terminus, the 399-residue chain is RNA polymerase sigma factor SigA1 (399 aa).

A disordered region spans residues 1 to 73 (MTQLISIDKE…DEDSVGEDED (73 aa)). Residues 60-73 (DAIDDEDSVGEDED) show a composition bias toward acidic residues. Residues 167–237 (MVQSNLRLVV…TRAIADQSRT (71 aa)) form a sigma-70 factor domain-2 region. The Interaction with polymerase core subunit RpoC signature appears at 191–194 (DLIQ). The interval 246 to 321 (ETISRIKKTT…EADGETPEDE (76 aa)) is sigma-70 factor domain-3. Residues 334–387 (VLSTLSPRERDVLRLRYGLDDGRMKTLEEIGQLFNVTRERIRQIEAKALRKLRH) form a sigma-70 factor domain-4 region. Positions 360–379 (LEEIGQLFNVTRERIRQIEA) form a DNA-binding region, H-T-H motif.

This sequence belongs to the sigma-70 factor family. RpoD/SigA subfamily. In terms of assembly, interacts transiently with the RNA polymerase catalytic core.

The protein localises to the cytoplasm. Sigma factors are initiation factors that promote the attachment of RNA polymerase to specific initiation sites and are then released. This sigma factor is the primary sigma factor during exponential growth. This chain is RNA polymerase sigma factor SigA1, found in Synechococcus elongatus (strain ATCC 33912 / PCC 7942 / FACHB-805) (Anacystis nidulans R2).